Here is a 492-residue protein sequence, read N- to C-terminus: Xaa-Pro dipeptidase (492 aa).

Ala-2 is modified (N-acetylalanine). At Ser-167 the chain carries Phosphoserine. His-255 provides a ligand contact to a dipeptide. Asp-276, Asp-287, and His-370 together coordinate Mn(2+). Asp-287 is an a dipeptide binding site. Residues His-377 and Arg-398 each coordinate a dipeptide. Mn(2+) is bound by residues Glu-412 and Glu-452.

This sequence belongs to the peptidase M24B family. Eukaryotic-type prolidase subfamily. In terms of assembly, homodimer. It depends on Mn(2+) as a cofactor.

It carries out the reaction Xaa-L-Pro dipeptide + H2O = an L-alpha-amino acid + L-proline. Functionally, dipeptidase that catalyzes the hydrolysis of dipeptides with a prolyl (Xaa-Pro) or hydroxyprolyl residue in the C-terminal position. The preferred dipeptide substrate is Gly-Pro, but other Xaa-Pro dipeptides, such as Ala-Pro, Met-Pro, Phe-Pro, Val-Pro and Leu-Pro, can be cleaved. Plays an important role in collagen metabolism because the high level of iminoacids in collagen. This chain is Xaa-Pro dipeptidase (Pepd), found in Rattus norvegicus (Rat).